Here is a 383-residue protein sequence, read N- to C-terminus: MRLLSFKKSKIVSIGTELEFQIIDRSSLSLVSRSKELMRALKDMRYRDQIKPEITQSMIEINSSIHQSAKEMYDELLELQKILVETAASIDIAFCGGGTHPFQQWTMQKIFPSKRFKKKFNQYRYLSKRATVFGQHIHIGCPTGDDAIYLTHALARYVPHFIAISASSPFYLGINTNYCSSRSTIFNAFPLSGVIPYLRNWQEFSDYYRKMYRWKIIENMKDFYWDIRPKPELGTIEIRVCDTPLTLRKSILITAYIQALALYLLKEKPVQLSHDLYYVYNYNRFQASRHGLEGELTVTDKDKPILIMDDILETIKKIEQYINGLGNSEYIEELYSDVINKQNDSVLINKIYKQDGSFTKLVAAQCELWLSDSKDRKWMTQPS.

Belongs to the glutamate--cysteine ligase type 2 family. YbdK subfamily.

The enzyme catalyses L-cysteine + L-glutamate + ATP = gamma-L-glutamyl-L-cysteine + ADP + phosphate + H(+). Its function is as follows. ATP-dependent carboxylate-amine ligase which exhibits weak glutamate--cysteine ligase activity. The polypeptide is Putative glutamate--cysteine ligase 2-1 (Legionella pneumophila (strain Corby)).